The chain runs to 382 residues: MTASIGKTNLLGLTQPEMEKFFDSIGEKRFRAGQVMKWIHHFGVDDFDAMTNVGKALREKLKAVAEIRGPEVVSEDISSDGTRKWVVRVASGSCVETVYIPQGKRGTLCVSSQAGCALDCSFCSTGKQGFNSNLTAAEVIGQVWIANKSFGSVPATVDRAITNVVMMGMGEPLLNFDNVIAAMHLMMDDLGYGISKRRVTLSTSGVVPMIDELAKHIDVSLALSLHAPNDALRNQLVPINKKYPLKMLLESCQRYMSALGEKRVLTIEYTLLKDVNDKLEHAVEMIELLKDVPCKINLIPFNPFPHSGYERPSNNAIRRFQDQLHHAGFNVTVRTTRGEDIDAACGQLVGQVLDRTRRSERYIAVRELSADADMPQSAATRT.

The Proton acceptor role is filled by Glu-96. Residues 102–342 form the Radical SAM core domain; the sequence is QGKRGTLCVS…VRTTRGEDID (241 aa). Cys-109 and Cys-345 form a disulfide bridge. [4Fe-4S] cluster-binding residues include Cys-116, Cys-120, and Cys-123. S-adenosyl-L-methionine contacts are provided by residues 170–171, Ser-202, 224–226, and Asn-302; these read GE and SLH. Cys-345 functions as the S-methylcysteine intermediate in the catalytic mechanism.

It belongs to the radical SAM superfamily. RlmN family. Requires [4Fe-4S] cluster as cofactor.

The protein localises to the cytoplasm. It catalyses the reaction adenosine(2503) in 23S rRNA + 2 reduced [2Fe-2S]-[ferredoxin] + 2 S-adenosyl-L-methionine = 2-methyladenosine(2503) in 23S rRNA + 5'-deoxyadenosine + L-methionine + 2 oxidized [2Fe-2S]-[ferredoxin] + S-adenosyl-L-homocysteine. The enzyme catalyses adenosine(37) in tRNA + 2 reduced [2Fe-2S]-[ferredoxin] + 2 S-adenosyl-L-methionine = 2-methyladenosine(37) in tRNA + 5'-deoxyadenosine + L-methionine + 2 oxidized [2Fe-2S]-[ferredoxin] + S-adenosyl-L-homocysteine. Functionally, specifically methylates position 2 of adenine 2503 in 23S rRNA and position 2 of adenine 37 in tRNAs. m2A2503 modification seems to play a crucial role in the proofreading step occurring at the peptidyl transferase center and thus would serve to optimize ribosomal fidelity. The sequence is that of Dual-specificity RNA methyltransferase RlmN from Pseudomonas fluorescens (strain ATCC BAA-477 / NRRL B-23932 / Pf-5).